Here is a 388-residue protein sequence, read N- to C-terminus: Succinate--CoA ligase [ADP-forming] subunit beta (388 aa).

Positions 9–244 constitute an ATP-grasp domain; the sequence is KELFARRGLP…VTQEDAREAH (236 aa). ATP is bound by residues Lys46, 53–55, Glu99, Thr102, and Glu107; that span reads GRG. The Mg(2+) site is built by Asn199 and Asp213. Residues Asn264 and 321–323 each bind substrate; that span reads GIV.

This sequence belongs to the succinate/malate CoA ligase beta subunit family. As to quaternary structure, heterotetramer of two alpha and two beta subunits. Mg(2+) is required as a cofactor.

The catalysed reaction is succinate + ATP + CoA = succinyl-CoA + ADP + phosphate. It carries out the reaction GTP + succinate + CoA = succinyl-CoA + GDP + phosphate. It participates in carbohydrate metabolism; tricarboxylic acid cycle; succinate from succinyl-CoA (ligase route): step 1/1. Succinyl-CoA synthetase functions in the citric acid cycle (TCA), coupling the hydrolysis of succinyl-CoA to the synthesis of either ATP or GTP and thus represents the only step of substrate-level phosphorylation in the TCA. The beta subunit provides nucleotide specificity of the enzyme and binds the substrate succinate, while the binding sites for coenzyme A and phosphate are found in the alpha subunit. This chain is Succinate--CoA ligase [ADP-forming] subunit beta, found in Hamiltonella defensa subsp. Acyrthosiphon pisum (strain 5AT).